A 296-amino-acid polypeptide reads, in one-letter code: Nucleotide-binding protein Spy49_0545 (296 aa).

Gly-13–Thr-20 contacts ATP. Asp-63 to Ser-66 contributes to the GTP binding site.

This sequence belongs to the RapZ-like family.

Displays ATPase and GTPase activities. The polypeptide is Nucleotide-binding protein Spy49_0545 (Streptococcus pyogenes serotype M49 (strain NZ131)).